Reading from the N-terminus, the 115-residue chain is Large ribosomal subunit protein bL20c (115 aa).

The protein belongs to the bacterial ribosomal protein bL20 family.

The protein resides in the plastid. It localises to the chloroplast. Its function is as follows. Binds directly to 23S ribosomal RNA and is necessary for the in vitro assembly process of the 50S ribosomal subunit. It is not involved in the protein synthesizing functions of that subunit. The protein is Large ribosomal subunit protein bL20c of Emiliania huxleyi (Coccolithophore).